Here is a 309-residue protein sequence, read N- to C-terminus: Ribosomal RNA small subunit methyltransferase H (309 aa).

S-adenosyl-L-methionine contacts are provided by residues 33 to 35 (GGH), D53, F79, D100, and Q107.

This sequence belongs to the methyltransferase superfamily. RsmH family.

Its subcellular location is the cytoplasm. It carries out the reaction cytidine(1402) in 16S rRNA + S-adenosyl-L-methionine = N(4)-methylcytidine(1402) in 16S rRNA + S-adenosyl-L-homocysteine + H(+). Its function is as follows. Specifically methylates the N4 position of cytidine in position 1402 (C1402) of 16S rRNA. The sequence is that of Ribosomal RNA small subunit methyltransferase H from Clostridium kluyveri (strain NBRC 12016).